Reading from the N-terminus, the 352-residue chain is uncharacterized protein (352 aa).

This sequence to Synechocystis PCC 6803 slr0039.

This is an uncharacterized protein from Archaeoglobus fulgidus (strain ATCC 49558 / DSM 4304 / JCM 9628 / NBRC 100126 / VC-16).